Here is a 1829-residue protein sequence, read N- to C-terminus: Protein let-418 (1829 aa).

2 stretches are compositionally biased toward acidic residues: residues 1 to 17 (MSTE…ESME) and 25 to 39 (ATEE…EQGD). 2 disordered regions span residues 1–81 (MSTE…YNST) and 147–198 (MAAQ…SDQE). Residues 48-63 (RSSRKKGGKGGKKGSK) are compositionally biased toward basic residues. 2 PHD-type zinc fingers span residues 256-303 (NDYC…CIEH) and 317-365 (DEFC…CETV). Chromo domains are found at residues 401 to 458 (LKPP…PPEF) and 489 to 550 (MQIH…NEDI). The 185-residue stretch at 614 to 798 (RHCWSNGTDA…FHLLNFLSKE (185 aa)) folds into the Helicase ATP-binding domain. 627–634 (DEMGLGKT) provides a ligand contact to ATP. A DEAH box motif is present at residues 749-752 (DEAH). Residues 930–1093 (LLQKMLRKLK…GKTMSKTELD (164 aa)) enclose the Helicase C-terminal domain. 4 disordered regions span residues 1168–1198 (ASYQ…EPDP), 1234–1289 (SENM…MPPL), 1415–1495 (AANG…ARPS), and 1745–1829 (NGER…PMET). Positions 1177 to 1186 (GQEEEEEEET) are enriched in acidic residues. Composition is skewed to polar residues over residues 1234-1247 (SENM…QNQT) and 1418-1427 (GSAQGSSRST). Basic and acidic residues predominate over residues 1429–1444 (KPKEEPKEEPMEKEDA). Polar residues predominate over residues 1446 to 1455 (ETVNGATSEP). The span at 1474 to 1490 (DEAKEPKEEPIETEKPR) shows a compositional bias: basic and acidic residues. The span at 1749–1773 (MEEDEPVEAEEEEGVKQEPDDETQD) shows a compositional bias: acidic residues. Residues 1792-1811 (DVPSTSAAAAVSSETAADAE) show a composition bias toward low complexity. Over residues 1819 to 1829 (APTDEPEPMET) the composition is skewed to acidic residues.

Component of the MEC (MEP-1-containing complex) complex that contains let-418, mep-1 and hda-1. Component of a NURD complex that contains let-418, hda-1, lin-40 and lin-53. Interacts with lin-1. Interacts with pie-1. Interacts with akir-1. Expressed in embryos and larva.

Its subcellular location is the nucleus. Its function is as follows. Part of a NuRD (Nucleosome Remodeling and Deacetylase) complex which is implicated in the synMuv B pathway that negatively regulates specification of vulval cell fate. This negative regulation is thought to be mediated via interaction with the promoter of lin-39, a key regulator in vulva development, and is dependent on the presence lin-1. Contributes to negative regulation of lag-2 which is expressed in the gut during larval development. Has a broad role in development. In association with akir-1, plays a role in regulating the transcription of antimicrobial peptide genes in response to fungal infection. In Caenorhabditis elegans, this protein is Protein let-418.